A 177-amino-acid polypeptide reads, in one-letter code: Isopentenyl-diphosphate Delta-isomerase (177 aa).

Mn(2+) contacts are provided by His22 and His28. The Nudix hydrolase domain occupies 26 to 160 (LRHKAISVFV…PERFTPWLRI (135 aa)). Cys62 is an active-site residue. His64 lines the Mn(2+) pocket. Position 82 (Glu82) interacts with Mg(2+). Residues Glu108 and Glu110 each coordinate Mn(2+). Residue Glu110 is part of the active site.

Belongs to the IPP isomerase type 1 family. The cofactor is Mg(2+). Mn(2+) is required as a cofactor.

The protein resides in the cytoplasm. The enzyme catalyses isopentenyl diphosphate = dimethylallyl diphosphate. Its pathway is isoprenoid biosynthesis; dimethylallyl diphosphate biosynthesis; dimethylallyl diphosphate from isopentenyl diphosphate: step 1/1. It participates in porphyrin-containing compound metabolism; chlorophyll biosynthesis. Catalyzes the 1,3-allylic rearrangement of the homoallylic substrate isopentenyl (IPP) to its highly electrophilic allylic isomer, dimethylallyl diphosphate (DMAPP). This is Isopentenyl-diphosphate Delta-isomerase from Cereibacter sphaeroides (strain ATCC 17025 / ATH 2.4.3) (Rhodobacter sphaeroides).